Consider the following 1128-residue polypeptide: MQGAQTSEDNLGSQSQPGPCGYIYFYPLATYPLREVATLGTGYAGHRCLTVPLLCGITVEPGFSINVKALHRRPDPNCGLLRATSYHRDIYVFHNAHMVPPIFEGPGLEALCGETREVFGYDAYSALPRESSEPGDFFPEGLDPSAYLGAVAITEAFKERLYSGNLVAIPSLKQEVAVGQSASVRVPLYDKEVFPEGVPQLRQFYNSDLSRCMHEALYTGLAQALRVRRVGKLVELLEKQSLQDQAKVAKVAPLKEFPASTISHPDSGALMIVDSAACELAVSYAPAMLEASHETPASLNYDSWPLFADCEGPEARVAALHRYNASLAPHVSTQIFATNSVLYVSGVSKSTGQGKESLFNSFYMTHGLGTLQEGTWDPCRRPCFSGWGGPDVTGTNGPGNYAVEHLVYAASFSPNLLARYAYYLQFCQGQKSSLTPVPETGSYVAGAAASPMCSLCEGRAPAVCLNTLFFRLRDRFPPVMSTQRRDPYVISGASGSYNETDFLGNFLNFIDKEDDGQRPDDEPRYTYWQLNQNLLERLSRLGIDAEGKLEKEPHGPRDFVKMFKDVDAAVDAEVVQFMNSMAKNNITYKDLVKSCYHVMQYSCNPFAQPACPIFTQLFYRSLLTILQDISLPICMCYENDNPGLGQSPPEWLKGHYQTLCTNFRSLAIDKGVLTAKEAKVVHGEPTCDLPDLDAALQGRVYGRRLPVRMSKVLMLCPRNIKIKNRVVFTGENAALQNSFIKSTTRRENYIINGPYMKFLNTYHKTLFPDTKLSSLYLWHNFSRRRSVPVPSGASAEEYSDLALFVDGGSRAHEESNVIDVVPGNLVTYAKQRLNNAILKACGQTQFYISLIQGLVPRTQSVPARDYPHVLGTRAVESAAAYAEATSSLTATTVVCAATDCLSQVCKARPVVTLPVTINKYTGVNGNNQIFQAGNLGYFMGRGVDRNLLQAPGAGLRKQAGGSSMRKKFVFATPTLGLTVKRRTQAATTYEIENIRAGLEAIISQKQEEDCVFDVVCNLVDAMGEACASLTRDDAEYLLGRFSVLADSVLETLATIASSGIEWTAGAARDFLEGVWGGPGAAQDNFISVAEPVSTASQASAGLLLGGGGQGSGGRRKRRLATVLPGLEV.

A required for nuclear localization region spans residues 1104-1128 (LGGGGQGSGGRRKRRLATVLPGLEV).

The protein belongs to the herpesviridae major DNA-binding protein family. As to quaternary structure, homooligomers. Forms double-helical filaments necessary for the formation of replication compartments within the host nucleus. Interacts with the origin-binding protein. Interacts with the helicase primase complex; this interaction stimulates primer synthesis activity of the helicase-primase complex. Interacts with the DNA polymerase. Interacts with the alkaline exonuclease; this interaction increases its nuclease processivity.

The protein localises to the virion tegument. Its subcellular location is the host nucleus. Its function is as follows. Plays several crucial roles in viral infection. Participates in the opening of the viral DNA origin to initiate replication by interacting with the origin-binding protein. May disrupt loops, hairpins and other secondary structures present on ssDNA to reduce and eliminate pausing of viral DNA polymerase at specific sites during elongation. Promotes viral DNA recombination by performing strand-transfer, characterized by the ability to transfer a DNA strand from a linear duplex to a complementary single-stranded DNA circle. Can also catalyze the renaturation of complementary single strands. Additionally, reorganizes the host cell nucleus, leading to the formation of prereplicative sites and replication compartments. This process is driven by the protein which can form double-helical filaments in the absence of DNA. This is Major DNA-binding protein from Homo sapiens (Human).